Reading from the N-terminus, the 290-residue chain is MSDESYESRIIDGKVLAQQVEEEVRSGVEDLESNRGIVPGLATILVGDDPASKMYVRLKHRACERVGIKAEDYLLPGDATQEELLTLIDSLNKNKDVHAILLQLPLPKHFSPQETQEAMEAISPTKDADGFHPYNMGKLMIGDEDLVPCTPHGVIRALEEYGVSVQGKNAVIVGHSNVVGKPMAAMLLNRNATVSVCHIFTDDLKKYTLGADIIVVATGVKHLIKADMVKEGTVIFDAGITKEEDGVYGDVDFENVIKKASLVTPVPGGVGPMTIAMLMKHVLLCAEKSL.

NADP(+) contacts are provided by residues 174-176 (GHS), Ile199, and Ile240.

The protein belongs to the tetrahydrofolate dehydrogenase/cyclohydrolase family. As to quaternary structure, homodimer.

It carries out the reaction (6R)-5,10-methylene-5,6,7,8-tetrahydrofolate + NADP(+) = (6R)-5,10-methenyltetrahydrofolate + NADPH. The catalysed reaction is (6R)-5,10-methenyltetrahydrofolate + H2O = (6R)-10-formyltetrahydrofolate + H(+). It functions in the pathway one-carbon metabolism; tetrahydrofolate interconversion. Its function is as follows. Catalyzes the oxidation of 5,10-methylenetetrahydrofolate to 5,10-methenyltetrahydrofolate and then the hydrolysis of 5,10-methenyltetrahydrofolate to 10-formyltetrahydrofolate. The sequence is that of Bifunctional protein FolD from Methanosarcina acetivorans (strain ATCC 35395 / DSM 2834 / JCM 12185 / C2A).